Reading from the N-terminus, the 144-residue chain is Putative sugar phosphate isomerase RBE_0278 (144 aa).

Histidine 12 is a substrate binding site. Residue histidine 101 is the Proton donor of the active site. Substrate is bound at residue arginine 135.

Belongs to the LacAB/RpiB family.

The sequence is that of Putative sugar phosphate isomerase RBE_0278 from Rickettsia bellii (strain RML369-C).